We begin with the raw amino-acid sequence, 396 residues long: Elongation factor Tu (396 aa).

One can recognise a tr-type G domain in the interval 10–206; sequence KPHVNVGTIG…ALDTYIPTPE (197 aa). The G1 stretch occupies residues 19 to 26; that stretch reads GHVDHGKT. Residue 19–26 coordinates GTP; it reads GHVDHGKT. Thr26 lines the Mg(2+) pocket. Residues 60-64 form a G2 region; it reads GITIN. The G3 stretch occupies residues 81–84; sequence DCPG. GTP-binding positions include 81-85 and 136-139; these read DCPGH and NKCD. The segment at 136–139 is G4; that stretch reads NKCD. Residues 174–176 form a G5 region; the sequence is SAK.

The protein belongs to the TRAFAC class translation factor GTPase superfamily. Classic translation factor GTPase family. EF-Tu/EF-1A subfamily. Monomer.

It is found in the cytoplasm. It carries out the reaction GTP + H2O = GDP + phosphate + H(+). GTP hydrolase that promotes the GTP-dependent binding of aminoacyl-tRNA to the A-site of ribosomes during protein biosynthesis. In Cupriavidus pinatubonensis (strain JMP 134 / LMG 1197) (Cupriavidus necator (strain JMP 134)), this protein is Elongation factor Tu.